Reading from the N-terminus, the 824-residue chain is Leucine--tRNA ligase (824 aa).

Residues 42-52 (PYPSGRIHMGH) carry the 'HIGH' region motif. The 'KMSKS' region motif lies at 581-585 (KMSKS). ATP is bound at residue K584.

This sequence belongs to the class-I aminoacyl-tRNA synthetase family.

Its subcellular location is the cytoplasm. The enzyme catalyses tRNA(Leu) + L-leucine + ATP = L-leucyl-tRNA(Leu) + AMP + diphosphate. The sequence is that of Leucine--tRNA ligase from Geotalea uraniireducens (strain Rf4) (Geobacter uraniireducens).